Reading from the N-terminus, the 255-residue chain is Aquaporin TIP4-1 (255 aa).

The next 2 helical transmembrane spans lie at 25-45 (AVLAELVLTFLFVFTGVSAAM) and 61-81 (TLAAVAIAHALAAGVLVTAGF). Residues 89-91 (NPA) carry the NPA 1 motif. Helical transmembrane passes span 108–128 (VLYVAAQLLASSAACVLLRFL), 148–168 (GLVMEVILTFSLLFVTYAMIL), and 176–196 (AIGPLLTGLIVGANSLAGGNF). The NPA 2 signature appears at 202–204 (NPA). A helical transmembrane segment spans residues 223-243 (WIGPLLGGPLAGFVYESLFLV).

The protein belongs to the MIP/aquaporin (TC 1.A.8) family. TIP (TC 1.A.8.10) subfamily.

The protein resides in the vacuole membrane. Functionally, aquaporins facilitate the transport of water and small neutral solutes across cell membranes. The polypeptide is Aquaporin TIP4-1 (TIP4-1) (Zea mays (Maize)).